A 471-amino-acid chain; its full sequence is Cysteine--tRNA ligase (471 aa).

Cysteine 30 lines the Zn(2+) pocket. Residues 32-42 (PTVYNFAHIGN) carry the 'HIGH' region motif. Residues cysteine 212, histidine 237, and glutamate 241 each contribute to the Zn(2+) site. Positions 270–274 (KMSKS) match the 'KMSKS' region motif. ATP is bound at residue lysine 273.

Belongs to the class-I aminoacyl-tRNA synthetase family. In terms of assembly, monomer. Zn(2+) is required as a cofactor.

The protein localises to the cytoplasm. The catalysed reaction is tRNA(Cys) + L-cysteine + ATP = L-cysteinyl-tRNA(Cys) + AMP + diphosphate. The chain is Cysteine--tRNA ligase from Leptospira interrogans serogroup Icterohaemorrhagiae serovar Lai (strain 56601).